The following is a 232-amino-acid chain: LRRN4 C-terminal-like protein (232 aa).

A signal peptide spans 1–22 (MPHSPCLLWLLAVTSLVPGTQP). Residues 23–189 (LVAGDLEGDE…RLTVPPRPLT (167 aa)) lie on the Extracellular side of the membrane. One can recognise a Fibronectin type-III domain in the interval 77 to 172 (PPHPPRLGEV…GAEGLDSADG (96 aa)). An N-linked (GlcNAc...) asparagine glycan is attached at asparagine 127. Residues 190 to 210 (LLHAAMGVGSALALLSCSALV) form a helical membrane-spanning segment. Residues 211-232 (WHFCLRQRWGCPRRGRPSHAGL) lie on the Cytoplasmic side of the membrane.

It is found in the membrane. This Bos taurus (Bovine) protein is LRRN4 C-terminal-like protein (LRRN4CL).